The following is a 461-amino-acid chain: Lysosomal dipeptide transporter MFSD1 (461 aa).

Over residues 1 to 13 (MADREEHQGLLDG) the composition is skewed to basic and acidic residues. Residues 1–22 (MADREEHQGLLDGDRDEDEGDK) are disordered. Residues 10–11 (LL) carry the Dileucine internalization motif motif. 10 helical membrane passes run 37 to 57 (LLHRILVLIFMCFLGFGSYFC), 81 to 101 (QLYAWYSWPNVVLCFLGGFLL), 111 to 131 (TVIFSLFVLVGQIIFAAGALA), 134 to 154 (FWLMNVGRFVFGIGGESLAVA), 264 to 284 (LWLIFIICVAYYVAIFPFIGL), 302 to 322 (AINSVVYIISAPASPLLGFLV), 331 to 351 (WVMLAVITTLLSHMMLAFTFW), 359 to 379 (LLGVSYSLLACALWPMVAFVV), 390 to 410 (FMQSIQNLGLAVMSIAAGSIL), and 416 to 436 (LFLEVFFIACLCMALLAVVLL).

This sequence belongs to the major facilitator superfamily. In terms of assembly, homodimer. Interacts with lysosomal protein GLMP (via lumenal domain); the interaction starts while both proteins are still in the endoplasmic reticulum and is required for stabilization of MFSD1 in lysosomes but has no direct effect on its targeting to lysosomes or transporter activity.

Its subcellular location is the lysosome membrane. The catalysed reaction is L-alpha-aminoacyl-L-arginine(out) = L-alpha-aminoacyl-L-arginine(in). The enzyme catalyses L-arginyl-L-alpha-amino acid(out) = L-arginyl-L-alpha-amino acid(in). It catalyses the reaction L-arginyl-glycine(out) = L-arginyl-glycine(in). It carries out the reaction L-alpha-aminoacyl-L-lysine(out) = L-alpha-aminoacyl-L-lysine(in). The catalysed reaction is L-aspartyl-L-lysine(out) = L-aspartyl-L-lysine(in). The enzyme catalyses L-alanyl-L-lysine(out) = L-alanyl-L-lysine(in). It catalyses the reaction L-lysyl-L-alpha-amino acid(out) = L-lysyl-L-alpha-amino acid(in). It carries out the reaction L-lysyl-L-alanine(out) = L-lysyl-L-alanine(in). The catalysed reaction is L-lysyl-L-lysine(out) = L-lysyl-L-lysine(in). The enzyme catalyses L-lysyl-glycine(out) = L-lysyl-glycine(in). It catalyses the reaction L-alpha-aminoacyl-L-histidine(out) = L-alpha-aminoacyl-L-histidine(in). It carries out the reaction L-histidyl-L-alpha-amino acid(out) = L-histidyl-L-alpha-amino acid(in). The catalysed reaction is L-histidyl-glycine(out) = L-histidyl-glycine(in). Its function is as follows. Lysosomal dipeptide uniporter that selectively exports lysine, arginine or histidine-containing dipeptides with a net positive charge from the lysosome lumen into the cytosol. Could play a role in a specific type of protein O-glycosylation indirectly regulating macrophages migration and tissue invasion. Also essential for liver homeostasis. In Danio rerio (Zebrafish), this protein is Lysosomal dipeptide transporter MFSD1 (mfsd1).